We begin with the raw amino-acid sequence, 75 residues long: Defense protein 6 (75 aa).

A signal peptide spans 1-20; that stretch reads MKTCLVFAFFLVAVFAAVQA. Positions 21–32 are excised as a propeptide; that stretch reads EENDSPQTLPRR. Disulfide bonds link C44-C63, C49-C68, and C53-C70.

Belongs to the invertebrate defensin family.

Its subcellular location is the secreted. Has antibacterial activity. In Lonomia obliqua (Moth), this protein is Defense protein 6.